A 601-amino-acid polypeptide reads, in one-letter code: N-acetyltransferase ESCO2 (601 aa).

Ser-29, Ser-75, Ser-223, and Ser-244 each carry phosphoserine. The segment at Ser-222–Asp-243 is disordered. Residues Lys-282–Glu-305 are compositionally biased toward basic and acidic residues. The disordered stretch occupies residues Lys-282 to Glu-315. Positions Ala-306–Glu-315 are enriched in polar residues. Phosphoserine is present on Ser-312. A CCHH-type zinc finger spans residues Thr-387 to His-411. A Phosphoserine modification is found at Ser-512.

Belongs to the acetyltransferase family. ECO subfamily. As to expression, widely expressed in fetal tissues. In adult, it is expressed in thymus, placenta and small intestine.

It localises to the nucleus. It is found in the chromosome. It carries out the reaction L-lysyl-[protein] + acetyl-CoA = N(6)-acetyl-L-lysyl-[protein] + CoA + H(+). In terms of biological role, acetyltransferase required for the establishment of sister chromatid cohesion. Couples the processes of cohesion and DNA replication to ensure that only sister chromatids become paired together. In contrast to the structural cohesins, the deposition and establishment factors are required only during the S phase. Acetylates the cohesin component SMC3. The sequence is that of N-acetyltransferase ESCO2 from Homo sapiens (Human).